The sequence spans 169 residues: Small ribosomal subunit protein uS5 (169 aa).

Residues 13–76 (LVEKLVSVRR…EKARRNMKDV (64 aa)) form the S5 DRBM domain.

Belongs to the universal ribosomal protein uS5 family. In terms of assembly, part of the 30S ribosomal subunit. Contacts proteins S4 and S8.

Its function is as follows. With S4 and S12 plays an important role in translational accuracy. In terms of biological role, located at the back of the 30S subunit body where it stabilizes the conformation of the head with respect to the body. This Hydrogenovibrio crunogenus (strain DSM 25203 / XCL-2) (Thiomicrospira crunogena) protein is Small ribosomal subunit protein uS5.